Consider the following 95-residue polypeptide: uncharacterized protein (95 aa).

The helical transmembrane segment at 29-53 (LVSTATCMAALFLRFKLIAWVAFIL) threads the bilayer.

It localises to the membrane. This is an uncharacterized protein from Schizosaccharomyces pombe (strain 972 / ATCC 24843) (Fission yeast).